The sequence spans 358 residues: Transcription factor bHLH67 (358 aa).

The segment at 125–176 is disordered; that stretch reads NMTLPSSTSSPLSAHSRRKRKINHLLPQEMTREKRKRRKTKPSKNNEEIENQ. The span at 127 to 137 shows a compositional bias: low complexity; sequence TLPSSTSSPLS. Over residues 157 to 166 the composition is skewed to basic residues; the sequence is EKRKRRKTKP. The 52-residue stretch at 175–226 folds into the bHLH domain; sequence NQRINHIAVERNRRRQMNEHINSLRALLPPSYIQRGDQASIVGGAINYVKVL.

Homodimer. Expressed constitutively in roots, leaves, stems, and flowers.

It is found in the nucleus. The protein is Transcription factor bHLH67 (BHLH67) of Arabidopsis thaliana (Mouse-ear cress).